A 303-amino-acid polypeptide reads, in one-letter code: Coenzyme PQQ synthesis protein B (303 aa).

It belongs to the PqqB family.

It functions in the pathway cofactor biosynthesis; pyrroloquinoline quinone biosynthesis. Its function is as follows. May be involved in the transport of PQQ or its precursor to the periplasm. This Pseudomonas putida (strain GB-1) protein is Coenzyme PQQ synthesis protein B.